Consider the following 150-residue polypeptide: uncharacterized protein (150 aa).

A signal peptide spans 1–23 (MYSILIACLVLLLCLIIYVGHRA).

It belongs to the asfivirus EP152R family.

Its subcellular location is the virion. This is an uncharacterized protein from African swine fever virus (isolate Warthog/Namibia/Wart80/1980) (ASFV).